We begin with the raw amino-acid sequence, 110 residues long: Large ribosomal subunit protein P1 (110 aa).

Residue alanine 2 is modified to Blocked amino end (Ala). A compositionally biased stretch (low complexity) spans 69–83 (AAPAAGGAAAATEAP). The interval 69–110 (AAPAAGGAAAATEAPAAKEEKKEEKKEESEEEDEDMGFGLFD) is disordered. Basic and acidic residues predominate over residues 84-96 (AAKEEKKEEKKEE). Phosphoserine; in form eL12'-P is present on serine 97.

In terms of assembly, part of the ribosomal stalk of the large ribosomal subunit; P1 and P2 exist as dimers which assemble on the P0 scaffold. In terms of processing, phosphorylation of Ser-97 converts eL12' to eL12'-P.

Plays an important role in the elongation step of protein synthesis. In Artemia salina (Brine shrimp), this protein is Large ribosomal subunit protein P1.